A 364-amino-acid chain; its full sequence is tRNA-specific 2-thiouridylase MnmA (364 aa).

Residues 12–19 (GISGGVDS) and methionine 38 each bind ATP. The segment at 98–100 (NPD) is interaction with target base in tRNA. The active-site Nucleophile is the cysteine 103. Cysteine 103 and cysteine 199 are joined by a disulfide. Glycine 127 serves as a coordination point for ATP. The interaction with tRNA stretch occupies residues 149-151 (KEQ). The active-site Cysteine persulfide intermediate is cysteine 199. Residues 311 to 312 (RY) form an interaction with tRNA region.

It belongs to the MnmA/TRMU family.

It localises to the cytoplasm. It carries out the reaction S-sulfanyl-L-cysteinyl-[protein] + uridine(34) in tRNA + AH2 + ATP = 2-thiouridine(34) in tRNA + L-cysteinyl-[protein] + A + AMP + diphosphate + H(+). In terms of biological role, catalyzes the 2-thiolation of uridine at the wobble position (U34) of tRNA, leading to the formation of s(2)U34. The polypeptide is tRNA-specific 2-thiouridylase MnmA (Hahella chejuensis (strain KCTC 2396)).